Reading from the N-terminus, the 268-residue chain is Small ribosomal subunit protein eS1 (268 aa).

The interval 1–21 (MAVGKNKGLSKGGKKGGKKKV) is disordered.

Belongs to the eukaryotic ribosomal protein eS1 family. Component of the small ribosomal subunit. Mature ribosomes consist of a small (40S) and a large (60S) subunit. The 40S subunit contains about 33 different proteins and 1 molecule of RNA (18S). The 60S subunit contains about 49 different proteins and 3 molecules of RNA (28S, 5.8S and 5S).

It localises to the cytoplasm. Its function is as follows. Essential for oogenesis; required for late follicle cell development. The sequence is that of Small ribosomal subunit protein eS1 from Drosophila erecta (Fruit fly).